We begin with the raw amino-acid sequence, 526 residues long: Fatty-acid amide hydrolase 2-B (526 aa).

Residues 12–32 (CLLVLVSGLFLALFRLLSPGT) form a helical membrane-spanning segment. Residues Lys-128 and Ser-203 each act as charge relay system in the active site. The Acyl-ester intermediate role is filled by Ser-227.

It belongs to the amidase family.

The protein resides in the membrane. The enzyme catalyses N-(5Z,8Z,11Z,14Z-eicosatetraenoyl)-ethanolamine + H2O = ethanolamine + (5Z,8Z,11Z,14Z)-eicosatetraenoate. The catalysed reaction is (9Z)-octadecenamide + H2O = (9Z)-octadecenoate + NH4(+). The chain is Fatty-acid amide hydrolase 2-B (faah2b) from Danio rerio (Zebrafish).